The chain runs to 928 residues: DNA-binding protein RFX6 (928 aa).

Disordered regions lie at residues 1–22 (MAKVPVLEDAFLPAQPSPQVSP) and 53–102 (PGGA…AADL). The segment covering 92 to 101 (SHDSKTKAAD) has biased composition (basic and acidic residues). Positions 124 to 199 (TLQWLEENYI…YHYYGIGIKE (76 aa)) form a DNA-binding region, RFX-type winged-helix.

It belongs to the RFX family. As to quaternary structure, interacts with RFX3.

Its subcellular location is the nucleus. Functionally, transcription factor required to direct islet cell differentiation during endocrine pancreas development. Specifically required for the differentiation of 4 of the 5 islet cell types and for the production of insulin. Not required for pancreatic PP (polypeptide-producing) cells differentiation. Acts downstream of NEUROG3 and regulates the transcription factors involved in beta-cell maturation and function, thereby restricting the expression of the beta-cell differentiation and specification genes, and thus the beta-cell fate choice. Activates transcription by forming a heterodimer with RFX3 and binding to the X-box in the promoter of target genes. Involved in glucose-stimulated insulin secretion by promoting insulin and L-type calcium channel gene transcription. The sequence is that of DNA-binding protein RFX6 (RFX6) from Ailuropoda melanoleuca (Giant panda).